A 308-amino-acid chain; its full sequence is tRNA dimethylallyltransferase (308 aa).

An ATP-binding site is contributed by 10-17 (GPTASGKT). A substrate-binding site is contributed by 12 to 17 (TASGKT). Interaction with substrate tRNA stretches follow at residues 35-38 (DSSL) and 159-163 (QRIFR).

Belongs to the IPP transferase family. As to quaternary structure, monomer. Requires Mg(2+) as cofactor.

The enzyme catalyses adenosine(37) in tRNA + dimethylallyl diphosphate = N(6)-dimethylallyladenosine(37) in tRNA + diphosphate. Its function is as follows. Catalyzes the transfer of a dimethylallyl group onto the adenine at position 37 in tRNAs that read codons beginning with uridine, leading to the formation of N6-(dimethylallyl)adenosine (i(6)A). The polypeptide is tRNA dimethylallyltransferase (Francisella tularensis subsp. novicida (strain U112)).